The chain runs to 424 residues: Histidine--tRNA ligase (424 aa).

Belongs to the class-II aminoacyl-tRNA synthetase family. Homodimer.

Its subcellular location is the cytoplasm. It carries out the reaction tRNA(His) + L-histidine + ATP = L-histidyl-tRNA(His) + AMP + diphosphate + H(+). The chain is Histidine--tRNA ligase from Shewanella woodyi (strain ATCC 51908 / MS32).